A 305-amino-acid polypeptide reads, in one-letter code: Ribosomal RNA small subunit methyltransferase H (305 aa).

Residues 47–49 (GGH), Asp-66, Phe-93, Asp-108, and Gln-115 each bind S-adenosyl-L-methionine.

This sequence belongs to the methyltransferase superfamily. RsmH family.

The protein localises to the cytoplasm. The enzyme catalyses cytidine(1402) in 16S rRNA + S-adenosyl-L-methionine = N(4)-methylcytidine(1402) in 16S rRNA + S-adenosyl-L-homocysteine + H(+). In terms of biological role, specifically methylates the N4 position of cytidine in position 1402 (C1402) of 16S rRNA. In Prochlorococcus marinus (strain MIT 9211), this protein is Ribosomal RNA small subunit methyltransferase H.